The following is a 414-amino-acid chain: MFVRVKLNKPVKWYRFYSTLDSHSLKLQSGSKFVKIKPVNNLRSSSSADFVSPPNSKLQSLIWQNPLQNVYITKKPWTPSTREAMVEFITHLHESYPEVNVIVQPDVAEEISQDFKSPLENDPNRPHILYTGPEQDIVNRTDLLVTLGGDGTILHGVSMFGNTQVPPVLAFALGTLGFLSPFDFKEHKKVFQEVISSRAKCLHRTRLECHLKKKDSNSSIVTHAMNDIFLHRGNSPHLTNLDIFIDGEFLTRTTADGVALATPTGSTAYSLSAGGSIVSPLVPAILMTPICPRSLSFRPLILPHSSHIRIKIGSKLNQKPVNSVVKLSVDGIPQQDLDVGDEIYVINEVGTIYIDGTQLPTTRKTENDFNNSKKPKRSGIYCVAKTENDWIRGINELLGFNSSFRLTKRQTDND.

Belongs to the NAD kinase family.

It is found in the mitochondrion matrix. The enzyme catalyses NADH + ATP = ADP + NADPH + H(+). Phosphorylates both NADH and NAD(+), with a twofold preference for NADH. Anti-oxidant factor and key source of the cellular reductant NADPH. In Saccharomyces cerevisiae (strain ATCC 204508 / S288c) (Baker's yeast), this protein is NADH kinase POS5, mitochondrial (POS5).